The chain runs to 1461 residues: Calmodulin-regulated spectrin-associated protein 2 (1461 aa).

Residues 211-324 (PGGQKARYRK…FMAELFWWFE (114 aa)) form the Calponin-homology (CH) domain. The segment at 361-389 (RDSSSSSDFSSRYTRPQTHSSASGGIRRS) is disordered. 2 stretches are compositionally biased toward low complexity: residues 362–371 (DSSSSSDFSS) and 380–389 (SSASGGIRRS). Ser391 and Ser393 each carry phosphoserine. At Thr401 the chain carries Phosphothreonine. 5 positions are modified to phosphoserine: Ser439, Ser572, Ser573, Ser585, and Ser647. 2 disordered regions span residues 573–613 (SPDN…EDSS) and 639–704 (ASNP…GSEL). Thr652 is modified (phosphothreonine). Phosphoserine is present on Ser654. Low complexity predominate over residues 654–673 (STKSQPGSSASSSSGVKMTS). The segment covering 677–687 (QKFRKLNHTDG) has biased composition (basic and acidic residues). A coiled-coil region spans residues 730 to 767 (LLASEMVHLRMRLEEKRRAIEAQKKKMEAAFTKQRQKM). The segment covering 787 to 826 (REEAAGAEDEKVYTDRAKERESQKMDGQRSKSLADIKESM) has biased composition (basic and acidic residues). Residues 787–855 (REEAAGAEDE…QWNLTSPSEE (69 aa)) are disordered. The residue at position 836 (Ser836) is a Phosphoserine. Residues 861 to 900 (EILEYTKSIEKLNSSLHFLQQEMQRLSLQQEMLMQMREQQ) are a coiled coil. The segment at 896 to 1007 (MREQQAWVIS…IQTRSFVCFG (112 aa)) is MBD region. Phosphoserine occurs at positions 905 and 910. 5 disordered regions span residues 921-992 (RQAG…RRFS), 1004-1044 (VCFG…GEKE), 1069-1090 (NEDQ…PTAP), 1102-1124 (DLKP…DKEQ), and 1163-1321 (KETQ…EYTG). The segment covering 926 to 937 (SSAAAPFSSDSP) has biased composition (low complexity). Polar residues predominate over residues 943 to 962 (SPQSSTRKSASFSVKNQRTP). A phosphothreonine mark is found at Thr970, Thr975, and Thr977. A phosphoserine mark is found at Ser981 and Ser992. Residues 1011-1028 (EPQKEPKQKEEIKKEPSE) are compositionally biased toward basic and acidic residues. The segment covering 1077–1089 (TEPPPKPVFPPTA) has biased composition (pro residues). 2 stretches are compositionally biased toward basic and acidic residues: residues 1104–1124 (KPPE…DKEQ) and 1163–1224 (KETQ…DTVI). At Ser1120 the chain carries Phosphoserine. Positions 1138–1210 (KDDQKAENDM…REFIRQEYMR (73 aa)) form a coiled coil. A compositionally biased stretch (polar residues) spans 1259-1271 (SSLSLASLNTGDS). Ser1285, Ser1291, and Ser1293 each carry phosphoserine. The span at 1306-1318 (NASTTSSVASGTE) shows a compositional bias: polar residues. One can recognise a CKK domain in the interval 1321–1455 (GPKLYKEPSA…QTKRPVTPKK (135 aa)).

It belongs to the CAMSAP1 family. As to quaternary structure, interacts with CAMSAP3. Interacts with KATNA1 and KATNB1; leading to regulate the length of CAMSAP2-decorated microtubule stretches. Interacts with a complex formed by AKAP9 and PDE4DIP isoform 2/MMG8/SMYLE, which recruits CAMSAP2 to the Golgi. Interacts with MAPRE1/EB1.

The protein resides in the cytoplasm. Its subcellular location is the cytoskeleton. The protein localises to the golgi apparatus. It localises to the cilium basal body. Functionally, key microtubule-organizing protein that specifically binds the minus-end of non-centrosomal microtubules and regulates their dynamics and organization. Specifically recognizes growing microtubule minus-ends and autonomously decorates and stabilizes microtubule lattice formed by microtubule minus-end polymerization. Acts on free microtubule minus-ends that are not capped by microtubule-nucleating proteins or other factors and protects microtubule minus-ends from depolymerization. In addition, it also reduces the velocity of microtubule polymerization. Through the microtubule cytoskeleton, also regulates the organization of cellular organelles including the Golgi and the early endosomes. Essential for the tethering, but not for nucleation of non-centrosomal microtubules at the Golgi: together with Golgi-associated proteins AKAP9 and PDE4DIP, required to tether non-centrosomal minus-end microtubules to the Golgi, an important step for polarized cell movement. Also acts as a regulator of neuronal polarity and development: localizes to non-centrosomal microtubule minus-ends in neurons and stabilizes non-centrosomal microtubules, which is required for neuronal polarity, axon specification and dendritic branch formation. Through the microtubule cytoskeleton, regulates the autophagosome transport. The chain is Calmodulin-regulated spectrin-associated protein 2 from Mus musculus (Mouse).